A 700-amino-acid chain; its full sequence is Elongation factor G 2 (700 aa).

A tr-type G domain is found at 8–290 (ERYRNIGISA…AVVDYLPSPI (283 aa)). GTP is bound by residues 17-24 (AHIDAGKT), 88-92 (DTPGH), and 142-145 (NKMD).

This sequence belongs to the TRAFAC class translation factor GTPase superfamily. Classic translation factor GTPase family. EF-G/EF-2 subfamily.

It localises to the cytoplasm. Its function is as follows. Catalyzes the GTP-dependent ribosomal translocation step during translation elongation. During this step, the ribosome changes from the pre-translocational (PRE) to the post-translocational (POST) state as the newly formed A-site-bound peptidyl-tRNA and P-site-bound deacylated tRNA move to the P and E sites, respectively. Catalyzes the coordinated movement of the two tRNA molecules, the mRNA and conformational changes in the ribosome. In Ralstonia nicotianae (strain ATCC BAA-1114 / GMI1000) (Ralstonia solanacearum), this protein is Elongation factor G 2 (fusB).